The sequence spans 245 residues: P2Y purinoceptor 13 (245 aa).

The Extracellular segment spans residues 1 to 9 (QLRAFVCRL). A disulfide bond links cysteine 7 and cysteine 85. Residues 10-30 (SSVIFYETMYVGIVLLGLIAF) traverse the membrane as a helical segment. The Cytoplasmic segment spans residues 31–35 (DRFLK). Residues 36–56 (IIRPLRNIFLKKTVFAKTVSV) form a helical membrane-spanning segment. Residues 57–85 (FIWSFFFFISLPNMILSNKEATPSSVKKC) lie on the Extracellular side of the membrane. A helical transmembrane segment spans residues 86–106 (ASLKGPLGLKWHQIVNNISQF). Topologically, residues 107–126 (IFWTVFVLMLVFYVVIAKKV) are cytoplasmic. The helical transmembrane segment at 127–147 (YDSYRKSKSKDRKNNKKLEGK) threads the bilayer. Residues 148 to 174 (VFVVVAVFFVCFAPFHFTRVPYTYSQT) are Extracellular-facing. The chain crosses the membrane as a helical span at residues 175–195 (NNKTDCRLQNQLFIAKETTLF). Topologically, residues 196–245 (LAATNICMDPLIYIFLCKKFTEKLPCMRGRKTIASSQENQSSQTDNITLG) are cytoplasmic.

This sequence belongs to the G-protein coupled receptor 1 family.

It is found in the cell membrane. Receptor for ADP. Coupled to G(i)-proteins. May play a role in hematopoiesis and the immune system. The polypeptide is P2Y purinoceptor 13 (P2RY13) (Macaca fascicularis (Crab-eating macaque)).